Consider the following 701-residue polypeptide: MDESPEPLQQGRGPVPVRRQRPAPRGLREMLKARLWCSCSCSVLCVRALVQDLLPATRWLRQYRPREYLAGDVMSGLVIGIILVPQAIAYSLLAGLQPIYSLYTSFFANLIYFLMGTSRHVSVGIFSLLCLMVGQVVDRELQLAGFDPSQDGLQPGANSSTLNGSAAMLDCGRDCYAIRVATALTLMTGLYQVLMGVLRLGFVSAYLSQPLLDGFAMGASVTILTSQLKHLLGVRIPRHQGPGMVVLTWLSLLRGAGQANVCDVVTSTVCLAVLLAAKELSDRYRHRLRVPLPTELLVIVVATLVSHFGQLHKRFGSSVAGDIPTGFMPPQVPEPRLMQRVALDAVALALVAAAFSISLAEMFARSHGYSVRANQELLAVGCCNVLPAFLHCFATSAALAKSLVKTATGCRTQLSSVVSATVVLLVLLALAPLFHDLQRSVLACVIVVSLRGALRKVWDLPRLWRMSPADALVWAGTAATCMLVSTEAGLLAGVILSLLSLAGRTQRPRTALLARIGDTAFYEDATEFEGLVPEPGVRVFRFGGPLYYANKDFFLQSLYSLTGLDAGCMAARRKEGGSETGVGEGGPAQGEDLGPVSTRAALVPAAAGFHTVVIDCAPLLFLDAAGVSTLQDLRRDYGALGISLLLACCSPPVRDILSRGGFLGEGPGDTAEEEQLFLSVHDAVQTARARHRELEATDAHL.

Positions 1 to 20 are disordered; the sequence is MDESPEPLQQGRGPVPVRRQ. 2 consecutive transmembrane segments (helical) span residues 68–90 and 94–116; these read YLAGDVMSGLVIGIILVPQAIAY and AGLQPIYSLYTSFFANLIYFLMG. 2 N-linked (GlcNAc...) asparagine glycosylation sites follow: Asn-158 and Asn-163. 7 consecutive transmembrane segments (helical) span residues 176–198, 255–277, 290–309, 342–364, 377–399, 412–434, and 472–494; these read YAIRVATALTLMTGLYQVLMGVL, GAGQANVCDVVTSTVCLAVLLAA, VPLPTELLVIVVATLVSHFG, ALDAVALALVAAAFSISLAEMFA, LLAVGCCNVLPAFLHCFATSAAL, TQLSSVVSATVVLLVLLALAPLF, and LVWAGTAATCMLVSTEAGLLAGV. An STAS domain is found at 527–687; it reads EFEGLVPEPG…LSVHDAVQTA (161 aa).

It belongs to the SLC26A/SulP transporter (TC 2.A.53) family. In terms of tissue distribution, expressed most abundantly in the kidney and liver, with lower levels in the pancreas, testis, brain, small intestine, colon, and lung.

It localises to the cell membrane. The protein resides in the basolateral cell membrane. It catalyses the reaction thiosulfate(in) + sulfate(out) = thiosulfate(out) + sulfate(in). The enzyme catalyses 2 hydrogencarbonate(out) + sulfate(in) = 2 hydrogencarbonate(in) + sulfate(out). The catalysed reaction is oxalate(in) + sulfate(out) = oxalate(out) + sulfate(in). It carries out the reaction oxalate(in) + 2 hydrogencarbonate(out) = oxalate(out) + 2 hydrogencarbonate(in). Functionally, sodium-independent sulfate anion transporter. Can transport other anions including bicarbonate, thiosulfate and oxalate by mediating sulfate-thiosulfate, sulfate-hydrogencarbonate and sulfate-oxalate anion exchange. Mediates oxalate-hydrogencarbonate anion exchange. This is Sulfate anion transporter 1 (SLC26A1) from Homo sapiens (Human).